The following is a 180-amino-acid chain: NAD(P)H-quinone oxidoreductase subunit I, chloroplastic (180 aa).

4Fe-4S ferredoxin-type domains lie at 55 to 84 (GRIHFEFDKCIACEVCVRVCPIDLPVVDWK) and 95 to 124 (LNYSIDFGICIFCGNCVEYCPTNCLSMTEE). Positions 64, 67, 70, 74, 104, 107, 110, and 114 each coordinate [4Fe-4S] cluster.

This sequence belongs to the complex I 23 kDa subunit family. In terms of assembly, NDH is composed of at least 16 different subunits, 5 of which are encoded in the nucleus. It depends on [4Fe-4S] cluster as a cofactor.

It localises to the plastid. Its subcellular location is the chloroplast thylakoid membrane. It catalyses the reaction a plastoquinone + NADH + (n+1) H(+)(in) = a plastoquinol + NAD(+) + n H(+)(out). It carries out the reaction a plastoquinone + NADPH + (n+1) H(+)(in) = a plastoquinol + NADP(+) + n H(+)(out). Its function is as follows. NDH shuttles electrons from NAD(P)H:plastoquinone, via FMN and iron-sulfur (Fe-S) centers, to quinones in the photosynthetic chain and possibly in a chloroplast respiratory chain. The immediate electron acceptor for the enzyme in this species is believed to be plastoquinone. Couples the redox reaction to proton translocation, and thus conserves the redox energy in a proton gradient. In Nandina domestica (Heavenly bamboo), this protein is NAD(P)H-quinone oxidoreductase subunit I, chloroplastic.